We begin with the raw amino-acid sequence, 561 residues long: Potassium-transporting ATPase potassium-binding subunit (561 aa).

The next 10 membrane-spanning stretches (helical) occupy residues 4–24 (IVMQ…PLGI), 65–85 (AVSV…VLML), 133–153 (IGLT…LFAV), 177–197 (LYIL…QGVV), 253–273 (FTNL…VVMF), 285–305 (AIMT…TISE), 380–400 (GLYG…LLVG), 417–437 (MVCL…AVAV), 484–504 (MVGA…ALYL), and 528–548 (FIGL…LPAL).

It belongs to the KdpA family. As to quaternary structure, the system is composed of three essential subunits: KdpA, KdpB and KdpC.

Its subcellular location is the cell membrane. In terms of biological role, part of the high-affinity ATP-driven potassium transport (or Kdp) system, which catalyzes the hydrolysis of ATP coupled with the electrogenic transport of potassium into the cytoplasm. This subunit binds the extracellular potassium ions and delivers the ions to the membrane domain of KdpB through an intramembrane tunnel. The sequence is that of Potassium-transporting ATPase potassium-binding subunit from Listeria monocytogenes serotype 4b (strain CLIP80459).